Reading from the N-terminus, the 106-residue chain is uncharacterized protein (106 aa).

2 disordered regions span residues 27–47 (FSDS…DVSD) and 83–106 (SPAM…VQSK). Over residues 29-39 (DSEDEPDDEAS) the composition is skewed to acidic residues. Over residues 94–106 (GIEREDRGGVQSK) the composition is skewed to basic and acidic residues.

Its subcellular location is the mitochondrion. This is an uncharacterized protein from Arabidopsis thaliana (Mouse-ear cress).